A 423-amino-acid polypeptide reads, in one-letter code: Pre-mRNA-splicing regulator WTAP (423 aa).

The disordered stretch occupies residues 234–423 (QQLSQMNQTQ…TSNASAGSVL (190 aa)). 4 stretches are compositionally biased toward polar residues: residues 239 to 276 (MNQT…SSNV), 285 to 301 (NGPS…SGSS), 358 to 377 (DSPT…TDSN), and 392 to 404 (TAGT…NGLD). Low complexity predominate over residues 405-423 (SSAAAVATNTSNASAGSVL).

This sequence belongs to the fl(2)d family. As to quaternary structure, component of the WMM complex, a N6-methyltransferase complex composed of a catalytic subcomplex, named MAC, and of an associated subcomplex, named MACOM. Component of the MACOM subcomplex.

The protein localises to the nucleus speckle. It is found in the nucleus. It localises to the nucleoplasm. In terms of biological role, associated component of the WMM complex, a complex that mediates N6-methyladenosine (m6A) methylation of RNAs, a modification that plays a role in the efficiency of mRNA splicing and RNA processing. This is Pre-mRNA-splicing regulator WTAP from Danio rerio (Zebrafish).